A 648-amino-acid polypeptide reads, in one-letter code: MKTNIKVFTSTGELTTLGRELGKGGEGAVYDIEEFVDSVAKIYHTPPPALKQDKLAFMAATADAQLLNYVAWPQATLHGGRGGKVIGFMMPKVSGKEPIHMIYSPAHRRQSYPHCAWDFLLYVARNIASSFATVHEHGHVVGDVNQNSFMVGRDSKVVLIDSDSFQINANGTLHLCEVGVSHFTPPELQTLPSFVGFERTENHDNFGLALLIFHVLFGGRHPYSGVPLISDAGNALETDITHFRYAYASDNQRRGLKPPPRSIPLSMLPSDVEAMFQQAFTESGVATGRPTAKAWVAALDSLRQQLKKCIVSAMHVYPAHLTDCPWCALDNQGVIYFIDLGEEVITTGGNFVLAKVWAMVMASVAPPALQLPLPDHFQPTGRPLPLGLLRREYIILLEIALSALSLLLCGLQAEPRYIILVPVLAAIWIIGSLTSKAYKAEVQQRREAFNRAKMDYDHLVRQIQQVGGLEGFIAKRTMLEKMKDEILGLPEEEKRALAALHDTARERQKQKFLEGFFIDVASIPGVGPARKAALRSFGIETAADVTRRGVKQVKGFGDHLTQAVIDWKASCERRFVFRPNEAITPADRQAVMAKMTAKRHRLESALTVGATELQRFRLHAPARTMPLMEPLRQAAEKLAQAQADLSRC.

The 288-residue stretch at 15–302 folds into the Protein kinase domain; the sequence is TTLGRELGKG…KAWVAALDSL (288 aa). ATP-binding positions include 21-29 and Lys41; that span reads LGKGGEGAV. The active-site Proton acceptor is the Asp143.

Autophosphorylated. Dephosphorylated by PphC.

Functionally, probable serine/threonine kinase. This Escherichia coli (strain K12) protein is Protein kinase YegI (yegI).